We begin with the raw amino-acid sequence, 108 residues long: MMKGGMAGLMKQAQQMQEKMQKMQEELANAEVTGQSGAGLVSVVMTGRHDVKRITLDDSLMQEDKEVLEDLIAAAVNDAVRKVEQNSQEKMAGMTAGMQLPPGFKMPF.

The interval methionine 1–glutamate 25 is disordered.

It belongs to the YbaB/EbfC family. Homodimer.

Its subcellular location is the cytoplasm. It localises to the nucleoid. Its function is as follows. Binds to DNA and alters its conformation. May be involved in regulation of gene expression, nucleoid organization and DNA protection. This is Nucleoid-associated protein Pmen_2646 from Ectopseudomonas mendocina (strain ymp) (Pseudomonas mendocina).